The sequence spans 624 residues: Bifunctional 3'-phosphoadenosine 5'-phosphosulfate synthase 1 (624 aa).

Met-1 is subject to N-acetylmethionine. Residues 1–225 (MEIPGSLCKK…VVELLQERDI (225 aa)) form an adenylyl-sulfate kinase region. Lys-12 carries the post-translational modification N6-acetyllysine. 62–67 (GAGKTT) provides a ligand contact to ATP. Residues 89–92 (DNIR), Phe-101, 106–109 (REEN), 132–133 (IS), Lys-171, and 184–185 (GF) contribute to the adenosine 5'-phosphosulfate site. ATP is bound by residues Cys-207, Cys-212, 419 to 422 (QLRN), 521 to 525 (GRDPA), and Ala-563. Residues 234-624 (VKELYVPENK…TEYYKSLEKA (391 aa)) form a sulfate adenylyltransferase region.

This sequence in the N-terminal section; belongs to the APS kinase family. The protein in the C-terminal section; belongs to the sulfate adenylyltransferase family. Homodimer. As to expression, expressed in testis, pancreas, kidney, thymus, prostate, ovary, small intestine, colon, leukocytes and liver. Also expressed in high endothelial venules (HEV) cells and in cartilage.

It carries out the reaction sulfate + ATP + H(+) = adenosine 5'-phosphosulfate + diphosphate. The catalysed reaction is adenosine 5'-phosphosulfate + ATP = 3'-phosphoadenylyl sulfate + ADP + H(+). It functions in the pathway sulfur metabolism; sulfate assimilation. Its activity is regulated as follows. Inhibited by chlorate. The kinase activity is subject to inhibition by the substrate adenylyl sulfate. Bifunctional enzyme with both ATP sulfurylase and APS kinase activity, which mediates two steps in the sulfate activation pathway. The first step is the transfer of a sulfate group to ATP to yield adenosine 5'-phosphosulfate (APS), and the second step is the transfer of a phosphate group from ATP to APS yielding 3'-phosphoadenylylsulfate (PAPS: activated sulfate donor used by sulfotransferase). In mammals, PAPS is the sole source of sulfate; APS appears to be only an intermediate in the sulfate-activation pathway. Required for normal biosynthesis of sulfated L-selectin ligands in endothelial cells. In Homo sapiens (Human), this protein is Bifunctional 3'-phosphoadenosine 5'-phosphosulfate synthase 1 (PAPSS1).